We begin with the raw amino-acid sequence, 426 residues long: Anaerobic glycerol-3-phosphate dehydrogenase subunit C (426 aa).

4Fe-4S ferredoxin-type domains are found at residues 21–53 (SYKY…LYPG) and 67–99 (KSAE…GDLI). Residues Cys-32, Cys-35, Cys-38, Cys-42, Cys-79, Cys-82, Cys-85, and Cys-89 each coordinate [4Fe-4S] cluster.

In terms of assembly, composed of a catalytic GlpA/B dimer and of GlpC.

The protein resides in the cell inner membrane. The protein operates within polyol metabolism; glycerol degradation via glycerol kinase pathway; glycerone phosphate from sn-glycerol 3-phosphate (anaerobic route): step 1/1. In terms of biological role, electron transfer protein; may also function as the membrane anchor for the GlpAB dimer. In Haemophilus influenzae (strain ATCC 51907 / DSM 11121 / KW20 / Rd), this protein is Anaerobic glycerol-3-phosphate dehydrogenase subunit C (glpC).